A 154-amino-acid polypeptide reads, in one-letter code: MGLSEGEWQLVLXXXXKVEADLAGHGQDVLIRLFKGHPETLEKFDKFKHLKTXXXMKASEDLKKHGNTVLTALGGILKKKGHHEAELKPLAQSHATKHKIPIKYLXXXXEAIIHVLHSRHPAEFGADAQGAMNKALELFRKDIAAKYKELGFHG.

The 147-residue stretch at 2-148 (GLSEGEWQLV…FRKDIAAKYK (147 aa)) folds into the Globin domain. Serine 4 is modified (phosphoserine). Histidine 65 is a nitrite binding site. Position 65 (histidine 65) interacts with O2. Threonine 68 bears the Phosphothreonine mark. Histidine 94 is a binding site for heme b.

Monomer.

Its subcellular location is the cytoplasm. It is found in the sarcoplasm. It catalyses the reaction Fe(III)-heme b-[protein] + nitric oxide + H2O = Fe(II)-heme b-[protein] + nitrite + 2 H(+). It carries out the reaction H2O2 + AH2 = A + 2 H2O. Functionally, monomeric heme protein which primary function is to store oxygen and facilitate its diffusion within muscle tissues. Reversibly binds oxygen through a pentacoordinated heme iron and enables its timely and efficient release as needed during periods of heightened demand. Depending on the oxidative conditions of tissues and cells, and in addition to its ability to bind oxygen, it also has a nitrite reductase activity whereby it regulates the production of bioactive nitric oxide. Under stress conditions, like hypoxia and anoxia, it also protects cells against reactive oxygen species thanks to its pseudoperoxidase activity. The protein is Myoglobin (MB) of Delphinapterus leucas (Beluga whale).